The following is an 867-amino-acid chain: Alanine--tRNA ligase (867 aa).

Zn(2+) is bound by residues H555, H559, C657, and H661.

Belongs to the class-II aminoacyl-tRNA synthetase family. Zn(2+) serves as cofactor.

It is found in the cytoplasm. The catalysed reaction is tRNA(Ala) + L-alanine + ATP = L-alanyl-tRNA(Ala) + AMP + diphosphate. In terms of biological role, catalyzes the attachment of alanine to tRNA(Ala) in a two-step reaction: alanine is first activated by ATP to form Ala-AMP and then transferred to the acceptor end of tRNA(Ala). Also edits incorrectly charged Ser-tRNA(Ala) and Gly-tRNA(Ala) via its editing domain. The polypeptide is Alanine--tRNA ligase (Psychromonas ingrahamii (strain DSM 17664 / CCUG 51855 / 37)).